A 514-amino-acid polypeptide reads, in one-letter code: 2,3-bisphosphoglycerate-independent phosphoglycerate mutase (514 aa).

Positions 13 and 63 each coordinate Mn(2+). Catalysis depends on S63, which acts as the Phosphoserine intermediate. Residues H124, 154–155, R186, R192, 258–261, and K332 contribute to the substrate site; these read RD and RADR. Residues D399, H403, D440, H441, and H459 each contribute to the Mn(2+) site.

It belongs to the BPG-independent phosphoglycerate mutase family. In terms of assembly, monomer. It depends on Mn(2+) as a cofactor.

It catalyses the reaction (2R)-2-phosphoglycerate = (2R)-3-phosphoglycerate. It functions in the pathway carbohydrate degradation; glycolysis; pyruvate from D-glyceraldehyde 3-phosphate: step 3/5. In terms of biological role, catalyzes the interconversion of 2-phosphoglycerate and 3-phosphoglycerate. This chain is 2,3-bisphosphoglycerate-independent phosphoglycerate mutase, found in Legionella pneumophila subsp. pneumophila (strain Philadelphia 1 / ATCC 33152 / DSM 7513).